Consider the following 602-residue polypeptide: Exopolysaccharide phosphotransferase SCO2594 (602 aa).

Positions 251 to 271 (PRAGEDLDAGDGAAGGPRPGL) are disordered.

The protein belongs to the stealth family.

The sequence is that of Exopolysaccharide phosphotransferase SCO2594 from Streptomyces coelicolor (strain ATCC BAA-471 / A3(2) / M145).